The primary structure comprises 293 residues: uncharacterized protein (293 aa).

To M.jannaschii MJ1614 and MJ0008.

This is an uncharacterized protein from Methanocaldococcus jannaschii (strain ATCC 43067 / DSM 2661 / JAL-1 / JCM 10045 / NBRC 100440) (Methanococcus jannaschii).